The following is a 124-amino-acid chain: Small ribosomal subunit protein uS12 (124 aa).

Aspartate 89 is subject to 3-methylthioaspartic acid.

Belongs to the universal ribosomal protein uS12 family. As to quaternary structure, part of the 30S ribosomal subunit. Contacts proteins S8 and S17. May interact with IF1 in the 30S initiation complex.

Its function is as follows. With S4 and S5 plays an important role in translational accuracy. Interacts with and stabilizes bases of the 16S rRNA that are involved in tRNA selection in the A site and with the mRNA backbone. Located at the interface of the 30S and 50S subunits, it traverses the body of the 30S subunit contacting proteins on the other side and probably holding the rRNA structure together. The combined cluster of proteins S8, S12 and S17 appears to hold together the shoulder and platform of the 30S subunit. The polypeptide is Small ribosomal subunit protein uS12 (Hydrogenovibrio crunogenus (strain DSM 25203 / XCL-2) (Thiomicrospira crunogena)).